Here is a 247-residue protein sequence, read N- to C-terminus: ATP synthase subunit a, chloroplastic (247 aa).

The next 5 helical transmembrane spans lie at 38-58 (QVLI…AIAV), 95-115 (VPFI…GALL), 134-154 (INTT…AGLT), 199-219 (LVVV…VMFL), and 220-240 (GLFT…AYIG).

Belongs to the ATPase A chain family. F-type ATPases have 2 components, CF(1) - the catalytic core - and CF(0) - the membrane proton channel. CF(1) has five subunits: alpha(3), beta(3), gamma(1), delta(1), epsilon(1). CF(0) has four main subunits: a, b, b' and c.

It localises to the plastid. Its subcellular location is the chloroplast thylakoid membrane. Key component of the proton channel; it plays a direct role in the translocation of protons across the membrane. This chain is ATP synthase subunit a, chloroplastic (atpI), found in Spinacia oleracea (Spinach).